The primary structure comprises 248 residues: ATP synthase subunit a, chloroplastic (248 aa).

Helical transmembrane passes span 34–54 (LHGQVFIVSWLVMLALIIFAL), 95–115 (VPYISTVFLFIFGANWAGALI), 134–154 (INVTVALALLTSISYFYAGIS), and 203–223 (VFALLVPILIPLPVMTLGLFA).

It belongs to the ATPase A chain family. F-type ATPases have 2 components, CF(1) - the catalytic core - and CF(0) - the membrane proton channel. CF(1) has five subunits: alpha(3), beta(3), gamma(1), delta(1), epsilon(1). CF(0) has four main subunits: a, b, b' and c.

It localises to the plastid. The protein resides in the chloroplast thylakoid membrane. Key component of the proton channel; it plays a direct role in the translocation of protons across the membrane. In Guillardia theta (Cryptophyte), this protein is ATP synthase subunit a, chloroplastic.